Reading from the N-terminus, the 235-residue chain is Large ribosomal subunit protein uL1 (235 aa).

It belongs to the universal ribosomal protein uL1 family. As to quaternary structure, part of the 50S ribosomal subunit.

In terms of biological role, binds directly to 23S rRNA. The L1 stalk is quite mobile in the ribosome, and is involved in E site tRNA release. Functionally, protein L1 is also a translational repressor protein, it controls the translation of the L11 operon by binding to its mRNA. The polypeptide is Large ribosomal subunit protein uL1 (Parasynechococcus marenigrum (strain WH8102)).